A 242-amino-acid polypeptide reads, in one-letter code: Probable 2-phosphosulfolactate phosphatase (242 aa).

Belongs to the ComB family. Mg(2+) serves as cofactor.

It carries out the reaction (2R)-O-phospho-3-sulfolactate + H2O = (2R)-3-sulfolactate + phosphate. In Parasynechococcus marenigrum (strain WH8102), this protein is Probable 2-phosphosulfolactate phosphatase.